The primary structure comprises 371 residues: Antibiotic efflux pump periplasmic linker protein ArpA (371 aa).

The first 22 residues, 1-22 (MQFKPAVTALVSAVALATLLSG), serve as a signal peptide directing secretion. Cysteine 23 carries N-palmitoyl cysteine lipidation. A lipid anchor (S-diacylglycerol cysteine) is attached at cysteine 23. Positions 115 to 155 (LAERYKQLIDEQAVSKQEYDDANAKRLQAEASLKSAQIDLR) form a coiled coil.

The protein belongs to the membrane fusion protein (MFP) (TC 8.A.1) family.

It is found in the cell inner membrane. Functionally, the periplasmic linker protein component of an antibiotic efflux pump. Confers resistance to numerous structurally unrelated antibiotics such as carbenicillin, chloramphenicol, erythromycin, novobiocin, streptomycin and tetracycline. Is not involved in organic solvent efflux. In Pseudomonas putida (Arthrobacter siderocapsulatus), this protein is Antibiotic efflux pump periplasmic linker protein ArpA (arpA).